Consider the following 300-residue polypeptide: Solute carrier family 25 member 35 (300 aa).

Solcar repeat units lie at residues 1–90 (MDFL…AESR), 100–193 (HSPV…IKDL), and 203–294 (QSWK…LRSF). A run of 6 helical transmembrane segments spans residues 38–58 (TYQRHYRNVFHAFFTIGKVDG), 59–79 (LAALQKGLGPALLYQFLMNGI), 91–119 (GYLHTNEGTHSPVRSAAAGALAGVMGAYL), 169–190 (AVGGLPRVVIGSSTQLCTFSSI), 205–225 (WKVALAAAMVSGVAIVVAMTP), and 277–300 (LGPHTILSLFFWDQLRSFYNTYAK).

The protein belongs to the mitochondrial carrier (TC 2.A.29) family.

Its subcellular location is the mitochondrion inner membrane. The catalysed reaction is a dicarboxylate(in) + sulfate(out) = a dicarboxylate(out) + sulfate(in). In terms of biological role, putative antiporter that exchanges dicarboxylates and sulfur oxoanions across the inner membrane of mitochondria. In Mus musculus (Mouse), this protein is Solute carrier family 25 member 35 (Slc25a35).